Reading from the N-terminus, the 84-residue chain is Small ribosomal subunit protein bS16 (84 aa).

This sequence belongs to the bacterial ribosomal protein bS16 family.

This Koribacter versatilis (strain Ellin345) protein is Small ribosomal subunit protein bS16.